The sequence spans 419 residues: MSGNSSTDMYLFKKSLKELKGKKGKGTELISVYVPAGRRLSDISQYLRQELSQSSNIKSKTTMKNVQSAIEVILQRLKLLKEPLEMGVIIFAGMIPRGGPGTEKMEVYVLEPPEPVKTFVYRCDSLFYTDPLEDFIQDTEVYGVILVDRNEATIGTVKGKTITVLKKLTSGVPGKFKAGGQSARRLERLIDDAAHQFMVRIGEYATESFMPILEEKKLKGLLLGGPGNTKNEFAEKDYLHHELKKKIIDTFDLCYTEEFGIRELLDKASDLLRDLDLMKEKNLIQRFFKELIKDDGGLSAYGEAQVMKYLEMGAIDTLIVTEDIGITRVTIKCNNCDYTQEVNVKTNEMFKFEEQLKTKACPTCGGAMYIDEEKDIIEHLSDLCNVHNTDIIVVSTDTEEGSQISRAFKGMAAILRYKL.

It belongs to the eukaryotic release factor 1 family. In terms of assembly, heterodimer of two subunits, one of which binds GTP.

It is found in the cytoplasm. Functionally, directs the termination of nascent peptide synthesis (translation) in response to the termination codons UAA, UAG and UGA. The polypeptide is Peptide chain release factor subunit 1 (Methanococcus maripaludis (strain C6 / ATCC BAA-1332)).